We begin with the raw amino-acid sequence, 414 residues long: Serine hydroxymethyltransferase (414 aa).

(6S)-5,6,7,8-tetrahydrofolate is bound by residues Leu-117 and 121–123; that span reads GHL. Lys-226 bears the N6-(pyridoxal phosphate)lysine mark. Residues Glu-241 and 349–351 each bind (6S)-5,6,7,8-tetrahydrofolate; that span reads TPF.

This sequence belongs to the SHMT family. In terms of assembly, homodimer. Pyridoxal 5'-phosphate serves as cofactor.

It is found in the cytoplasm. It catalyses the reaction (6R)-5,10-methylene-5,6,7,8-tetrahydrofolate + glycine + H2O = (6S)-5,6,7,8-tetrahydrofolate + L-serine. The protein operates within one-carbon metabolism; tetrahydrofolate interconversion. It functions in the pathway amino-acid biosynthesis; glycine biosynthesis; glycine from L-serine: step 1/1. Its function is as follows. Catalyzes the reversible interconversion of serine and glycine with tetrahydrofolate (THF) serving as the one-carbon carrier. Also exhibits THF-independent aldolase activity toward beta-hydroxyamino acids, producing glycine and aldehydes, via a retro-aldol mechanism. The protein is Serine hydroxymethyltransferase of Methanothrix thermoacetophila (strain DSM 6194 / JCM 14653 / NBRC 101360 / PT) (Methanosaeta thermophila).